Reading from the N-terminus, the 255-residue chain is Ly6/PLAUR domain-containing protein 8 (255 aa).

A signal peptide spans 1 to 20 (MRGVFIAGVIAAFAITVVDS). 13 N-linked (GlcNAc...) asparagine glycosylation sites follow: Asn22, Asn30, Asn53, Asn72, Asn76, Asn105, Asn115, Asn128, Asn154, Asn169, Asn179, Asn200, and Asn210. One can recognise a UPAR/Ly6 domain in the interval 121–170 (CMSCYGHNKTLCEEKPQKCYEGEQCVFIIAEMVNGSGRVELKGCSDISNS). Residue Ser233 is the site of GPI-anchor amidated serine attachment. Positions 234–255 (MGTKASFTSSIFGSLLLLKLLF) are cleaved as a propeptide — removed in mature form.

It belongs to the CNF-like-inhibitor family. Post-translationally, highly N-glycosylated. Not O-glycosylated. GPI-anchored. The GPI-anchor is cleaved, leading to secretion into the colonic lumen. In terms of tissue distribution, specifically present in enterocytes located at the uppermost epithelial layer of the colon (at protein level). Exclusively expressed in the large intestine: specifically expressed on the apical surface of epithelial cells located at the uppermost layer of the colonic gland.

Its subcellular location is the cell membrane. It localises to the secreted. Secreted protein specifically required to prevent invasion of Gram-negative bacteria in the inner mucus layer of the colon epithelium, a portion of the large intestine which is free of commensal microbiota. Prevents invasion of flagellated microbiota by binding to the flagellum of bacteria, such as P.mirabilis, thereby inhibiting bacterial motility in the intestinal lumen. Segregation of intestinal bacteria and epithelial cells in the colon is required to preserve intestinal homeostasis. The chain is Ly6/PLAUR domain-containing protein 8 from Mus musculus (Mouse).